We begin with the raw amino-acid sequence, 201 residues long: Large ribosomal subunit protein uL4 (201 aa).

The disordered stretch occupies residues 45–73 (AQKTRAEVTGSGKKPWRQKGTGRARAGSV).

It belongs to the universal ribosomal protein uL4 family. Part of the 50S ribosomal subunit.

Functionally, one of the primary rRNA binding proteins, this protein initially binds near the 5'-end of the 23S rRNA. It is important during the early stages of 50S assembly. It makes multiple contacts with different domains of the 23S rRNA in the assembled 50S subunit and ribosome. Its function is as follows. Forms part of the polypeptide exit tunnel. The chain is Large ribosomal subunit protein uL4 from Yersinia pseudotuberculosis serotype O:1b (strain IP 31758).